A 419-amino-acid polypeptide reads, in one-letter code: UDP-N-acetylglucosamine 1-carboxyvinyltransferase (419 aa).

Residue 22–23 (KN) coordinates phosphoenolpyruvate. R93 contacts UDP-N-acetyl-alpha-D-glucosamine. C117 (proton donor) is an active-site residue. Position 117 is a 2-(S-cysteinyl)pyruvic acid O-phosphothioketal (C117). Residues D307 and I329 each coordinate UDP-N-acetyl-alpha-D-glucosamine.

Belongs to the EPSP synthase family. MurA subfamily.

It localises to the cytoplasm. The enzyme catalyses phosphoenolpyruvate + UDP-N-acetyl-alpha-D-glucosamine = UDP-N-acetyl-3-O-(1-carboxyvinyl)-alpha-D-glucosamine + phosphate. Its pathway is cell wall biogenesis; peptidoglycan biosynthesis. Cell wall formation. Adds enolpyruvyl to UDP-N-acetylglucosamine. This is UDP-N-acetylglucosamine 1-carboxyvinyltransferase from Shewanella denitrificans (strain OS217 / ATCC BAA-1090 / DSM 15013).